The primary structure comprises 247 residues: 5-oxoprolinase subunit A (247 aa).

Belongs to the LamB/PxpA family. Forms a complex composed of PxpA, PxpB and PxpC.

The catalysed reaction is 5-oxo-L-proline + ATP + 2 H2O = L-glutamate + ADP + phosphate + H(+). In terms of biological role, catalyzes the cleavage of 5-oxoproline to form L-glutamate coupled to the hydrolysis of ATP to ADP and inorganic phosphate. The polypeptide is 5-oxoprolinase subunit A (Ralstonia pickettii (strain 12J)).